Consider the following 154-residue polypeptide: Decarboxylase claH (154 aa).

Belongs to the tpcK family.

It catalyses the reaction atrochrysone carboxylate + H(+) = atrochrysone + CO2. It participates in pigment biosynthesis. Decarboxylase involved in the biosynthesis of the bianthraquinone cladofulvin, a conidial pigment not required for virulence but that plays a role in fitness and resistance to environmental stresses including UV light and low-temperature stress. The pathway begins with the synthesis of atrochrysone thioester by the polyketide synthase (PKS) claG. The atrochrysone carboxyl ACP thioesterase claF then breaks the thioester bond and releases the atrochrysone carboxylic acid from claG. This compound is decarboxylated by claH to yield emodin, which is further converted to chrysophanol hydroquinone by the reductase claC and the dehydratase claB. The cytochrome monooxygenase P450 claM then catalyzes the dimerization of nataloe-emodin to cladofulvin. This is Decarboxylase claH from Passalora fulva (Tomato leaf mold).